The sequence spans 300 residues: Bifunctional protein FolD 2 (300 aa).

NADP(+) contacts are provided by residues 166–168, Ser-191, and Ile-232; that span reads GRS.

It belongs to the tetrahydrofolate dehydrogenase/cyclohydrolase family. In terms of assembly, homodimer.

The enzyme catalyses (6R)-5,10-methylene-5,6,7,8-tetrahydrofolate + NADP(+) = (6R)-5,10-methenyltetrahydrofolate + NADPH. It carries out the reaction (6R)-5,10-methenyltetrahydrofolate + H2O = (6R)-10-formyltetrahydrofolate + H(+). The protein operates within one-carbon metabolism; tetrahydrofolate interconversion. Its function is as follows. Catalyzes the oxidation of 5,10-methylenetetrahydrofolate to 5,10-methenyltetrahydrofolate and then the hydrolysis of 5,10-methenyltetrahydrofolate to 10-formyltetrahydrofolate. In Roseobacter denitrificans (strain ATCC 33942 / OCh 114) (Erythrobacter sp. (strain OCh 114)), this protein is Bifunctional protein FolD 2.